The chain runs to 309 residues: Small ribosomal subunit protein uS7m (309 aa).

Positions 39–86 (DSTTSSRLPPRVQIQQQQQQRTQPYSTETTPPPNSNNGDLAGIEGQPP) are disordered. A compositionally biased stretch (low complexity) spans 51–61 (QIQQQQQQRTQ).

The protein belongs to the universal ribosomal protein uS7 family. In terms of assembly, component of the mitochondrial small ribosomal subunit (mt-SSU). Mature N.crassa 74S mitochondrial ribosomes consist of a small (37S) and a large (54S) subunit. The 37S small subunit contains a 16S ribosomal RNA (16S mt-rRNA) and 32 different proteins. The 54S large subunit contains a 23S rRNA (23S mt-rRNA) and 42 different proteins.

Its subcellular location is the mitochondrion. Functionally, component of the mitochondrial ribosome (mitoribosome), a dedicated translation machinery responsible for the synthesis of mitochondrial genome-encoded proteins, including at least some of the essential transmembrane subunits of the mitochondrial respiratory chain. The mitoribosomes are attached to the mitochondrial inner membrane and translation products are cotranslationally integrated into the membrane. This is Small ribosomal subunit protein uS7m (rsm7) from Neurospora crassa (strain ATCC 24698 / 74-OR23-1A / CBS 708.71 / DSM 1257 / FGSC 987).